The sequence spans 303 residues: MVSLSCLISYGECLLETVQTHPWSTIGVVVFLSSVKNAPLMWHARLIIAVFYHSVTRKNDVVTIERYGRQGLFGYIVTSSRSPLYECDINGHKSDSTYFSDLDINRIHLITRLFKGAGDLSLRPDRPNVAPEDRPKKMRVLLGGTCCSFRREIKPYAAYEIHSRVLAWDEKWLYVVSYFVKPGSARKMASLQTEVGDKCEMTDLARSMVFTSAITKFVFKDGRKTVRPADALEEMGLLSASEEVVETSEAGEDLWTRSRVEERRKTGIKIAQHFIALDELHDQFEHVSEHPFLGKFGVLGTMF.

Belongs to the lcsJ thioesterase family.

It participates in secondary metabolite biosynthesis. Its function is as follows. Thioesterase; part of the gene cluster that mediates the biosynthesis of oxaleimides, cytotoxic compounds containing an unusual disubstituted succinimide moiety. The first step of the pathway is provided by the HR-PKS poxF that serves in a new mode of collaborative biosynthesis with the PKS-NRPS poxE, by providing the olefin containing amino acid substrate via the synthesis of an ACP-bound dec-4-enoate. The cytochrome P450 monooxygenase poxM-catalyzed oxidation at the alpha-position creates the enzyme-bound 2-hydroxydec-4-enoyl-ACP thioester, which may be prone to spontaneous hydrolysis to yield 2-hydroxydec-4-enoic acid due to increased electrophilicity of the carbonyl. 2-hydroxydec-4-enoic acid can then be further oxidized by poxM to yield the alpha-ketoacid 2-oxodec-4-enoicacid, which is reductively aminated by the aminotransferase poxL to yield (S,E)-2-aminodec-4-enoic acid. The Hybrid PKS-NRPS synthetase poxE then performs condensation between the octaketide product of its PKS modules and the amino group of (S,E)-2-aminodec-4-enoic acid which is activated and incorporated by the adenylation domain. The resulting aminoacyl product can be cyclized by the Diels-Alderase PoxQ and reductively released by the reductive (R) domain of poxE to yield an aldehyde intermediate. The released aldehyde is then substrate for a Knoevenagel condensation by the hydrolyase poxO followed by an oxidation at the 5-position of the pyrrolidone ring. The presence of the olefin from the amino acid building block allows for migration of the substituted allyl group to occur. This allylic transposition reaction takes place in a conjugate addition, semipinacol-like fashion to yield a succinimide intermediate. Iterative two-electron oxidations of the C7 methyl of the succinimide intermediate to the carboxylic acid can be catalyzed by one of two remaining cytochrome P450 monooxygenasess poxC or poxD to yield oxaleimide A. Subsequent oxidation yields the maleimide scaffold oxaleimide I. Both oxaleimide A and oxaleimide I can undergo oxidative modifications in the decalin ring to yield the series of products oxaleimides B to H. This Penicillium oxalicum (strain 114-2 / CGMCC 5302) (Penicillium decumbens) protein is Thioesterase poxG.